Reading from the N-terminus, the 945-residue chain is Microtubule cross-linking factor 3 (945 aa).

Composition is skewed to low complexity over residues 1–23, 72–93, and 110–126; these read MSQP…AAAT, QQQL…TSGT, and PKGA…GAEG. The signal sequence occupies residues 1 to 25; it reads MSQPPSGGAAPAATSASAAAAATEA. 4 disordered regions span residues 1-250, 265-293, 307-366, and 494-522; these read MSQP…SYWK, KERA…PVAG, SPMA…TLKN, and LSLK…DNED. Over residues 141-151 the composition is skewed to basic and acidic residues; sequence GQPEEAPREIE. Residues 164-179 are compositionally biased toward gly residues; sequence GGVGGGGEGGGAGGGP. Low complexity predominate over residues 219–235; the sequence is TAATSKTPGPGSRNSGS. Gly residues predominate over residues 236 to 247; the sequence is GSTGSGSGGGGS. Positions 328–345 are enriched in low complexity; that stretch reads AMQAAAPPSSQPHSQQLQ. The stretch at 340 to 724 forms a coiled coil; the sequence is HSQQLQEQED…GKVMQLQYEN (385 aa). Basic and acidic residues-rich tracts occupy residues 353 to 366 and 494 to 511; these read EMEK…TLKN and LSLK…EKKA. The residue at position 567 (Ser567) is a Phosphoserine. A disordered region spans residues 741 to 811; that stretch reads GIRGSPRDSD…PWPKSFSDRQ (71 aa). Residues 745-766 are compositionally biased toward basic and acidic residues; it reads SPRDSDAESDAGKKESDDDSRP. Ser779 is modified (phosphoserine). Residues 809–833 adopt a coiled-coil conformation; it reads DRQQMKDIRSEAERLGKTIDRLIAD. Residues 913 to 933 traverse the membrane as a helical segment; sequence PIILLILILVLFSSLSYTTIF.

Belongs to the MTCL family.

The protein localises to the membrane. In Mus musculus (Mouse), this protein is Microtubule cross-linking factor 3 (Mtcl3).